The chain runs to 607 residues: UvrABC system protein C (607 aa).

In terms of domain architecture, GIY-YIG spans 16 to 94; sequence GRPGVYRMFD…IKEWRPPYNI (79 aa). The UVR domain occupies 203 to 238; it reads NALTDELSGAMEQAASTLDFERAAELRDQISLLRRV.

It belongs to the UvrC family. In terms of assembly, interacts with UvrB in an incision complex.

It is found in the cytoplasm. The UvrABC repair system catalyzes the recognition and processing of DNA lesions. UvrC both incises the 5' and 3' sides of the lesion. The N-terminal half is responsible for the 3' incision and the C-terminal half is responsible for the 5' incision. The polypeptide is UvrABC system protein C (Pseudomonas fluorescens (strain SBW25)).